Here is a 365-residue protein sequence, read N- to C-terminus: 3-dehydroquinate synthase (365 aa).

Residues 106–110 (GVIGD), 130–131 (TT), lysine 142, lysine 151, and 169–172 (FFAT) contribute to the NAD(+) site. Zn(2+) is bound by residues glutamate 184, histidine 247, and histidine 264.

This sequence belongs to the sugar phosphate cyclases superfamily. Dehydroquinate synthase family. The cofactor is Co(2+). Requires Zn(2+) as cofactor. NAD(+) serves as cofactor.

Its subcellular location is the cytoplasm. It carries out the reaction 7-phospho-2-dehydro-3-deoxy-D-arabino-heptonate = 3-dehydroquinate + phosphate. The protein operates within metabolic intermediate biosynthesis; chorismate biosynthesis; chorismate from D-erythrose 4-phosphate and phosphoenolpyruvate: step 2/7. Functionally, catalyzes the conversion of 3-deoxy-D-arabino-heptulosonate 7-phosphate (DAHP) to dehydroquinate (DHQ). This Listeria monocytogenes serotype 4b (strain CLIP80459) protein is 3-dehydroquinate synthase.